Here is a 485-residue protein sequence, read N- to C-terminus: MTNKVRTRFAPSPTGYMHVGNLRTALYAYLIAKHDNGDFILRIEDTDQERLVEGALDVIYNTLKITGLSHDEGPDIGGPVGPYVQSERRNIYIEYAEKLIEKGEAYYCFCSKERLDMLRANSEALKRPFRYDKHCIDLSKEEIDKKIAEGVPYVIRQKNPTTGSTSFHDEIYGDISVDNSELDDMILIKSDGLPTYNFANVVDDHLMGITHVVRGSEYLSSSPKYNRLYEAFGWDVPIYVHCPPIMKDEHHKLSKRNGDASFEDLMAKGYLKEAILNYIALLGWNPGGEKEVFSMKELIEAFNYRNINKAPAVFDTKKLKWMNGEYIRALSLDKFHEMALPHYKEALTRDLDTKKISELLHTRVEVLNEIPEQLDFFNNLLEYSPEMYIHKKMKTTYENSLKSLEEVLPRLEALENWTFENIKEVCMNLVKELEVKNGVVLWPIRTAVSGKQFTPGGAFEIADILGKEETLERIKIGINKLKALQ.

The short motif at 11-21 is the 'HIGH' region element; the sequence is PSPTGYMHVGN. The Zn(2+) site is built by Cys-108, Cys-110, Cys-135, and Asp-137. Positions 252–256 match the 'KMSKS' region motif; that stretch reads KLSKR. Lys-255 is an ATP binding site.

This sequence belongs to the class-I aminoacyl-tRNA synthetase family. Glutamate--tRNA ligase type 1 subfamily. Monomer. Zn(2+) is required as a cofactor.

It is found in the cytoplasm. The catalysed reaction is tRNA(Glu) + L-glutamate + ATP = L-glutamyl-tRNA(Glu) + AMP + diphosphate. Catalyzes the attachment of glutamate to tRNA(Glu) in a two-step reaction: glutamate is first activated by ATP to form Glu-AMP and then transferred to the acceptor end of tRNA(Glu). This chain is Glutamate--tRNA ligase, found in Clostridium botulinum (strain Loch Maree / Type A3).